The chain runs to 358 residues: Phospho-N-acetylmuramoyl-pentapeptide-transferase (358 aa).

10 consecutive transmembrane segments (helical) span residues 21–41, 71–91, 95–115, 133–153, 166–186, 197–217, 234–254, 261–281, 286–306, and 337–357; these read YLTL…FVVG, TMGG…WADL, YIWV…VDDY, FWQS…ASVA, VAVN…VGSS, GLAV…AYAA, AGEL…FLWF, VFMG…LAVL, LVLF…MLQV, and IVRF…TLKI.

Belongs to the glycosyltransferase 4 family. MraY subfamily. Mg(2+) is required as a cofactor.

The protein localises to the cell inner membrane. It carries out the reaction UDP-N-acetyl-alpha-D-muramoyl-L-alanyl-gamma-D-glutamyl-meso-2,6-diaminopimeloyl-D-alanyl-D-alanine + di-trans,octa-cis-undecaprenyl phosphate = di-trans,octa-cis-undecaprenyl diphospho-N-acetyl-alpha-D-muramoyl-L-alanyl-D-glutamyl-meso-2,6-diaminopimeloyl-D-alanyl-D-alanine + UMP. Its pathway is cell wall biogenesis; peptidoglycan biosynthesis. In terms of biological role, catalyzes the initial step of the lipid cycle reactions in the biosynthesis of the cell wall peptidoglycan: transfers peptidoglycan precursor phospho-MurNAc-pentapeptide from UDP-MurNAc-pentapeptide onto the lipid carrier undecaprenyl phosphate, yielding undecaprenyl-pyrophosphoryl-MurNAc-pentapeptide, known as lipid I. The polypeptide is Phospho-N-acetylmuramoyl-pentapeptide-transferase (Nitrosococcus oceani (strain ATCC 19707 / BCRC 17464 / JCM 30415 / NCIMB 11848 / C-107)).